Reading from the N-terminus, the 278-residue chain is Elongation factor Ts (278 aa).

An involved in Mg(2+) ion dislocation from EF-Tu region spans residues 82–85 (TDFV).

The protein belongs to the EF-Ts family.

Its subcellular location is the cytoplasm. In terms of biological role, associates with the EF-Tu.GDP complex and induces the exchange of GDP to GTP. It remains bound to the aminoacyl-tRNA.EF-Tu.GTP complex up to the GTP hydrolysis stage on the ribosome. In Streptomyces coelicolor (strain ATCC BAA-471 / A3(2) / M145), this protein is Elongation factor Ts (tsf).